Reading from the N-terminus, the 444-residue chain is uncharacterized protein (444 aa).

Positions 164-381 (GAYGKSFLLE…EKALKKEGIR (218 aa)) constitute a Radical SAM core domain. Positions 178, 182, and 185 each coordinate [4Fe-4S] cluster.

It depends on [4Fe-4S] cluster as a cofactor.

This is an uncharacterized protein from Methanocaldococcus jannaschii (strain ATCC 43067 / DSM 2661 / JAL-1 / JCM 10045 / NBRC 100440) (Methanococcus jannaschii).